Consider the following 198-residue polypeptide: Suppressor of cytokine signaling 2 (198 aa).

Residues 1–29 form a disordered region; that stretch reads MTLRCLEPSGNGGEGTRSQWGTAGSAEEP. Positions 1–75 are interaction with AREL1; it reads MTLRCLEPSG…PEGTFLIRDS (75 aa). The residue at position 30 (serine 30) is a Phosphoserine. Positions 48–156 constitute an SH2 domain; it reads WYWGSMTVNE…TVHLYLTKPL (109 aa). Serine 52 carries the post-translational modification Phosphoserine; by PKC. The SOCS box domain occupies 151-197; that stretch reads YLTKPLYTSAPSLQHLCRLTINKCTGAIWGLPLPTRLKDYLEEYKFQ. Lysine 173 is covalently cross-linked (Glycyl lysine isopeptide (Lys-Gly) (interchain with G-Cter in ubiquitin)).

Substrate-recognition component of the ECS(SOCS2) complex, composed of SOCS2, CUL5, ELOB, ELOC and RNF7/RBX2. Interacts with IGF1R. Interacts with DCUN1D1. Post-translationally, ubiquitinated; mediated by AREL1 and leading to its subsequent proteasomal degradation. Ubiquitination is dependent on its phosphorylation at Ser-52, by PKC. Ubiquitination is stimulated by LPS. In terms of processing, phosphorylation at Ser-52 by PKC facilitates its ubiquitination and proteasomal degradation. As to expression, high expression in heart, placenta, lung, kidney and prostate. Predominantly expressed in pulmonary epithelia cells, specifically type II pneumocytes.

Its subcellular location is the cytoplasm. The protein operates within protein modification; protein ubiquitination. With respect to regulation, substrate-binding is prevented by the covalent inhibitor MN551 that cross-links with Cys-111. Also inhibited by a MN551 derivative, MN714, which contains a pivaloyloxymethyl that allows cell permeability. Substrate-recognition component of a cullin-5-RING E3 ubiquitin-protein ligase complex (ECS complex, also named CRL5 complex), which mediates the ubiquitination and subsequent proteasomal degradation of target proteins, such as EPOR and GHR. Specifically recognizes and binds phosphorylated proteins via its SH2 domain, promoting their ubiquitination. The ECS(SOCS2) complex acts as a key regulator of growth hormone receptor (GHR) levels by mediating ubiquitination and degradation of GHR, following GHR phosphorylation by JAK2. The ECS(SOCS2) also catalyzes ubiquitination and degradation of JAK2-phosphorylated EPOR. This chain is Suppressor of cytokine signaling 2, found in Homo sapiens (Human).